The chain runs to 270 residues: Formamidopyrimidine-DNA glycosylase (270 aa).

Pro-2 acts as the Schiff-base intermediate with DNA in catalysis. Glu-3 serves as the catalytic Proton donor. Catalysis depends on Lys-57, which acts as the Proton donor; for beta-elimination activity. His-90, Arg-109, and Lys-150 together coordinate DNA. An FPG-type zinc finger spans residues 235–269; the sequence is QIYGKKGCPCPKCGQKIESFTVGQRNSYVCLHCQK. Arg-259 functions as the Proton donor; for delta-elimination activity in the catalytic mechanism.

Belongs to the FPG family. In terms of assembly, monomer. Zn(2+) serves as cofactor.

It catalyses the reaction Hydrolysis of DNA containing ring-opened 7-methylguanine residues, releasing 2,6-diamino-4-hydroxy-5-(N-methyl)formamidopyrimidine.. The enzyme catalyses 2'-deoxyribonucleotide-(2'-deoxyribose 5'-phosphate)-2'-deoxyribonucleotide-DNA = a 3'-end 2'-deoxyribonucleotide-(2,3-dehydro-2,3-deoxyribose 5'-phosphate)-DNA + a 5'-end 5'-phospho-2'-deoxyribonucleoside-DNA + H(+). Involved in base excision repair of DNA damaged by oxidation or by mutagenic agents. Acts as a DNA glycosylase that recognizes and removes damaged bases. Has a preference for oxidized purines, such as 7,8-dihydro-8-oxoguanine (8-oxoG). Has AP (apurinic/apyrimidinic) lyase activity and introduces nicks in the DNA strand. Cleaves the DNA backbone by beta-delta elimination to generate a single-strand break at the site of the removed base with both 3'- and 5'-phosphates. This Actinobacillus succinogenes (strain ATCC 55618 / DSM 22257 / CCUG 43843 / 130Z) protein is Formamidopyrimidine-DNA glycosylase.